The sequence spans 325 residues: Methionyl-tRNA formyltransferase (325 aa).

113-116 (SLLP) is a binding site for (6S)-5,6,7,8-tetrahydrofolate.

It belongs to the Fmt family.

The catalysed reaction is L-methionyl-tRNA(fMet) + (6R)-10-formyltetrahydrofolate = N-formyl-L-methionyl-tRNA(fMet) + (6S)-5,6,7,8-tetrahydrofolate + H(+). In terms of biological role, attaches a formyl group to the free amino group of methionyl-tRNA(fMet). The formyl group appears to play a dual role in the initiator identity of N-formylmethionyl-tRNA by promoting its recognition by IF2 and preventing the misappropriation of this tRNA by the elongation apparatus. The chain is Methionyl-tRNA formyltransferase from Chromohalobacter salexigens (strain ATCC BAA-138 / DSM 3043 / CIP 106854 / NCIMB 13768 / 1H11).